We begin with the raw amino-acid sequence, 226 residues long: MGFWLSLCGAVVLVAYLLGSFPTGYIAVKQLKGIDIREVGSGSTGATNVLRTLGKGPGAFVLGLDCLKGVLAIALVYYLFTFASNQNLIPTTVNIELWQPWLVTLAGIAAILGHSKSIFLGFTGGKSVATSLGILLAMNWQVGLATFGVFAVVVAISRIVSLSSIMGAIAVSIVMVFLQQPLPYILFGIAGGLYVILRHRSNIERLLAGTEPKIGQKLVTETEQSA.

6 helical membrane passes run 1 to 21, 60 to 80, 102 to 122, 134 to 154, 159 to 178, and 182 to 197; these read MGFW…LGSF, FVLG…YYLF, LVTL…FLGF, ILLA…AVVV, IVSL…MVFL, and LPYI…YVIL.

The protein belongs to the PlsY family. In terms of assembly, probably interacts with PlsX.

It localises to the cell inner membrane. The catalysed reaction is an acyl phosphate + sn-glycerol 3-phosphate = a 1-acyl-sn-glycero-3-phosphate + phosphate. The protein operates within lipid metabolism; phospholipid metabolism. Functionally, catalyzes the transfer of an acyl group from acyl-phosphate (acyl-PO(4)) to glycerol-3-phosphate (G3P) to form lysophosphatidic acid (LPA). This enzyme utilizes acyl-phosphate as fatty acyl donor, but not acyl-CoA or acyl-ACP. The polypeptide is Glycerol-3-phosphate acyltransferase (Nostoc sp. (strain PCC 7120 / SAG 25.82 / UTEX 2576)).